The chain runs to 2391 residues: MTDLLRSVVTVIDVFYKYTKQDGECGTLSKGELKELLEKELHPVLKNPDDPDTVDVIMHMLDRDHDRRLDFTEFLLMIFKLTMACNKVLSKEYCKASGSKKHRRGHRHQEEESETEEDEEDTPGHKSGYRHSSWSEGEEHGYSSGHSRGTVKCRHGSNSRRLGRQGNLSSSGNQEGSQKRYHRSSCGHSWSGGKDRHGSSSVELRERINKSHISPSRESGEEYESGSGSNSWERKGHGGLSCGLETSGHESNSTQSRIREQKLGSSCSGSGDSGRRSHACGYSNSSGCGRPQNASSSCQSHRFGGQGNQFSYIQSGCQSGIKGGQGHGCVSGGQPSGCGQPESNPCSQSYSQRGYGARENGQPQNCGGQWRTGSSQSSCCGQYGSGGSQSCSNGQHEYGSCGRFSNSSSSNEFSKCDQYGSGSSQSTSFEQHGTGLSQSSGFEQHVCGSGQTCGQHESTSSQSLGYDQHGSSSGKTSGFGQHGSGSGQSSGFGQCGSGSGQSSGFGQHGSVSGQSSGFGQHGSVSGQSSGFGQHESRSRQSSYGQHGSGSSQSSGYGQYGSRETSGFGQHGLGSGQSTGFGQYGSGSGQSSGFGQHGSGSGQSSGFGQHESRSGQSSYGQHSSGSSQSSGYGQHGSRQTSGFGQHGSGSSQSTGFGQYGSGSGQSSGFGQHVSGSGQSSGFGQHESRSGHSSYGQHGFGSSQSSGYGQHGSSSGQTSGFGQHELSSGQSSSFGQHGSGSGQSSGFGQHGSGSGQSSGFGQHESRSGQSSYGQHSSGSSQSSGYGQHGSRQTSGFGQHGSGSSQSTGFGQYGSGSGQSAGFGQHGSGSGQSSGFGQHESRSHQSSYGQHGSGSSQSSGYGQHGSSSGQTSGFGQHRSSSGQYSGFGQHGSGSGQSSGFGQHGTGSGQYSGFGQHESRSHQSSYGQHGSGSSQSSGYGQHGSSSGQTFGFGQHRSGSGQSSGFGQHGSGSGQSSGFGQHESGSGKSSGFGQHESRSSQSNYGQHGSGSSQSSGYGQHGSSSGQTTGFGQHRSSSGQYSGFGQHGSGSDQSSGFGQHGTGSGQSSGFGQYESRSRQSSYGQHGSGSSQSSGYGQHGSNSGQTSGFGQHRPGSGQSSGFGQYGSGSGQSSGFGQHGSGTGKSSGFAQHEYRSGQSSYGQHGTGSSQSSGCGQHESGSGPTTSFGQHVSGSDNFSSSGQHISDSGQSTGFGQYGSGSGQSTGLGQGESQQVESGSTVHGRQETTHGQTINTTRHSQSGQGQSTQTGSRVTRRRRSSQSENSDSEVHSKVSHRHSEHIHTQAGSHYPKSGSTVRRRQGTTHGQRGDTTRHGHSGHGQSTQTGSRTSGRQRFSHSDATDSEVHSGVSHRPHSQEQTHSQAGSQHGESESTVHERHETTYGQTGEATGHGHSGHGQSTQRGSRTTGRRGSGHSESSDSEVHSGGSHRPQSQEQTHGQAGSQHGESGSTVHGRHGTTHGQTGDTTRHAHYHHGKSTQRGSSTTGRRGSGHSESSDSEVHSGGSHTHSGHTHGQSGSQHGESESIIHDRHRITHGQTGDTTRHSYSGHEQTTQTGSRTTGRQRTSHSESTDSEVHSGGSHRPHSREHTYGQAGSQHEEPEFTVHERHGTTHGQIGDTTGHSHSGHGQSTQRGSRTTGRQRSSHSESSDSEVHSGVSHTHTGHTHGQAGSQHGQSESIVPERHGTTHGQTGDTTRHAHYHHGLTTQTGSRTTGRRGSGHSEYSDSEGYSGVSHTHSGHTHGQARSQHGESESIVHERHGTIHGQTGDTTRHAHSGHGQSTQTGSRTTGRRSSGHSEYSDSEGHSGFSQRPHSRGHTHGQAGSQHGESESIVDERHGTTHGQTGDTSGHSQSGHGQSTQSGSSTTGRRRSGHSESSDSEVHSGGSHTHSGHTHSQARSQHGESESTVHKRHQTTHGQTGDTTEHGHPSHGQTIQTGSRTTGRRGSGHSEYSDSEGPSGVSHTHSGHTHGQAGSHYPESGSSVHERHGTTHGQTADTTRHGHSGHGQSTQRGSRTTGRRASGHSEYSDSEGHSGVSHTHSGHAHGQAGSQHGESGSSVHERHGTTHGQTGDTTRHAHSGHGQSTQRGSRTAGRRGSGHSESSDSEVHSGVSHTHSGHTYGQARSQHGESGSAIHGRQGTIHGQTGDTTRHGQSGHGQSTQTGSRTTGRQRSSHSESSDSEVHSEASPTHSGHTHSQAGSRHGQSGSSGHGRQGTTHGQTGDTTRHAHYGYGQSTQRGSRTTGRRGSGHSESSDSEVHSWGSHTHSGHIQGQAGSQQRQPGSTVHGRLETTHGQTGDTTRHGHSGYGQSTQTGSRSSRASHFQSHSSERQRHGSSQVWKHGSYGPAEYDYGHTGYGPSGGSRKSISNSHLSWSTDSTANKQLSRH.

The tract at residues 1 to 81 (MTDLLRSVVT…TEFLLMIFKL (81 aa)) is S-100-like. 2 EF-hand domains span residues 8–43 (VVTV…ELHP) and 49–84 (DDPD…LTMA). The Ca(2+) site is built by Asp-62, Asp-64, Asp-66, Arg-68, and Glu-73. Disordered regions lie at residues 96-275 (ASGS…DSGR), 349-369 (SYSQ…CGGQ), and 406-2391 (NSSS…LSRH). The span at 98–107 (GSKKHRRGHR) shows a compositional bias: basic residues. Over residues 111–121 (EESETEEDEED) the composition is skewed to acidic residues. Over residues 149–163 (GTVKCRHGSNSRRLG) the composition is skewed to basic residues. Residues 166–176 (GNLSSSGNQEG) are compositionally biased toward polar residues. Over residues 193-209 (GKDRHGSSSVELRERIN) the composition is skewed to basic and acidic residues. Residues 245–289 (ETSGHESNSTQSRIREQKLGSSCSGSGDSGRRSHACGYSNSSGCG) form a Filaggrin 1 repeat. Composition is skewed to polar residues over residues 420 to 442 (GSGS…SSGF) and 449 to 476 (SGQT…SGKT). A Filaggrin 2 repeat occupies 421-466 (SGSSQSTSFEQHGTGLSQSSGFEQHVCGSGQTCGQHESTSSQSLGY). Residues 480-507 (GQHGSGSGQSSGFGQCGSGSGQSSGFGQ) are compositionally biased toward gly residues. The segment covering 508–562 (HGSVSGQSSGFGQHGSVSGQSSGFGQHESRSRQSSYGQHGSGSSQSSGYGQYGSR) has biased composition (low complexity). Over residues 568–604 (GQHGLGSGQSTGFGQYGSGSGQSSGFGQHGSGSGQSS) the composition is skewed to gly residues. The span at 605-655 (GFGQHESRSGQSSYGQHSSGSSQSSGYGQHGSRQTSGFGQHGSGSSQSTGF) shows a compositional bias: low complexity. The segment covering 656–666 (GQYGSGSGQSS) has biased composition (gly residues). Residues 667–734 (GFGQHVSGSG…SSGQSSSFGQ (68 aa)) show a composition bias toward low complexity. Positions 735–756 (HGSGSGQSSGFGQHGSGSGQSS) are enriched in gly residues. The segment covering 757–807 (GFGQHESRSGQSSYGQHSSGSSQSSGYGQHGSRQTSGFGQHGSGSSQSTGF) has biased composition (low complexity). Residues 808 to 831 (GQYGSGSGQSAGFGQHGSGSGQSS) show a composition bias toward gly residues. A compositionally biased stretch (low complexity) spans 832–884 (GFGQHESRSHQSSYGQHGSGSSQSSGYGQHGSSSGQTSGFGQHRSSSGQYSGF). Gly residues predominate over residues 885–908 (GQHGSGSGQSSGFGQHGTGSGQYS). Residues 918 to 956 (HQSSYGQHGSGSSQSSGYGQHGSSSGQTFGFGQHRSGSG) are compositionally biased toward low complexity. The segment covering 957-972 (QSSGFGQHGSGSGQSS) has biased composition (gly residues). Composition is skewed to low complexity over residues 973–982 (GFGQHESGSG) and 994–1027 (SSQS…GFGQ). One copy of the Filaggrin 3 repeat lies at 1019–1051 (SGQTTGFGQHRSSSGQYSGFGQHGSGSDQSSGF). A compositionally biased stretch (gly residues) spans 1052–1062 (GQHGTGSGQSS). Residues 1063–1098 (GFGQYESRSRQSSYGQHGSGSSQSSGYGQHGSNSGQ) are compositionally biased toward low complexity. A Filaggrin 4 repeat occupies 1097 to 1141 (GQTSGFGQHRPGSGQSSGFGQYGSGSGQSSGFGQHGSGTGKSSGF). A compositionally biased stretch (gly residues) spans 1111–1137 (QSSGFGQYGSGSGQSSGFGQHGSGTGK). Positions 1148–1174 (SGQSSYGQHGTGSSQSSGCGQHESGSG) are enriched in low complexity. Polar residues predominate over residues 1175–1198 (PTTSFGQHVSGSDNFSSSGQHISD). Residues 1206–1220 (GQYGSGSGQSTGLGQ) show a composition bias toward gly residues. Over residues 1226 to 1249 (VESGSTVHGRQETTHGQTINTTRH) the composition is skewed to polar residues. The segment covering 1250–1263 (SQSGQGQSTQTGSR) has biased composition (low complexity). Ser-1276 is modified (phosphoserine). The segment covering 1329 to 1343 (HGQSTQTGSRTSGRQ) has biased composition (polar residues). Over residues 1346-1355 (SHSDATDSEV) the composition is skewed to basic and acidic residues. The span at 1366-1377 (QEQTHSQAGSQH) shows a compositional bias: polar residues. Residues 1378–1390 (GESESTVHERHET) are compositionally biased toward basic and acidic residues. Residues 1406-1416 (HGQSTQRGSRT) are compositionally biased toward low complexity. Ser-1427 and Ser-1428 each carry phosphoserine. The segment covering 1439–1459 (RPQSQEQTHGQAGSQHGESGS) has biased composition (polar residues). The Filaggrin 5 repeat unit spans residues 1455–1510 (GESGSTVHGRHGTTHGQTGDTTRHAHYHHGKSTQRGSSTTGRRGSGHSESSDSEVH). A compositionally biased stretch (low complexity) spans 1487-1496 (TQRGSSTTGR). Phosphoserine occurs at positions 1504 and 1505. Over residues 1510–1529 (HSGGSHTHSGHTHGQSGSQH) the composition is skewed to low complexity. A compositionally biased stretch (polar residues) spans 1544–1559 (HGQTGDTTRHSYSGHE). The segment covering 1560–1572 (QTTQTGSRTTGRQ) has biased composition (low complexity). Basic and acidic residues-rich tracts occupy residues 1575-1584 (SHSESTDSEV) and 1605-1618 (QHEE…ERHG). Phosphoserine is present on Ser-1579. One copy of the Filaggrin 6 repeat lies at 1607 to 1662 (EEPEFTVHERHGTTHGQIGDTTGHSHSGHGQSTQRGSRTTGRQRSSHSESSDSEVH). Over residues 1627 to 1649 (TTGHSHSGHGQSTQRGSRTTGRQ) the composition is skewed to low complexity. Over residues 1652–1661 (SHSESSDSEV) the composition is skewed to basic and acidic residues. Ser-1656 and Ser-1657 each carry phosphoserine. Composition is skewed to low complexity over residues 1662–1686 (HSGV…QSES) and 1711–1720 (GLTTQTGSRT). Basic and acidic residues predominate over residues 1755–1768 (QHGESESIVHERHG). The Filaggrin 7 repeat unit spans residues 1757 to 1812 (GESESIVHERHGTIHGQTGDTTRHAHSGHGQSTQTGSRTTGRRSSGHSEYSDSEGH). The span at 1784–1795 (GHGQSTQTGSRT) shows a compositional bias: low complexity. Ser-1800 and Ser-1807 each carry phosphoserine. The span at 1834–1845 (GESESIVDERHG) shows a compositional bias: basic and acidic residues. Positions 1849–1873 (GQTGDTSGHSQSGHGQSTQSGSSTT) are enriched in low complexity. The span at 1879–1888 (GHSESSDSEV) shows a compositional bias: basic and acidic residues. 3 positions are modified to phosphoserine: Ser-1883, Ser-1884, and Ser-1959. Filaggrin repeat units follow at residues 1928 to 1964 (DTTE…SEGP) and 1984 to 2039 (PESG…SEGH). Composition is skewed to low complexity over residues 1963–1982 (GPSG…AGSH) and 2013–2022 (GQSTQRGSRT). Position 2034 is a phosphoserine (Ser-2034). Composition is skewed to low complexity over residues 2039 to 2059 (HSGV…SQHG), 2114 to 2125 (HSGVSHTHSGHT), and 2162 to 2176 (HGQS…TGRQ). Residues 2134–2189 (GESGSAIHGRQGTIHGQTGDTTRHGQSGHGQSTQTGSRTTGRQRSSHSESSDSEVH) form a Filaggrin 10 repeat. Over residues 2179-2190 (SHSESSDSEVHS) the composition is skewed to basic and acidic residues. 3 stretches are compositionally biased toward low complexity: residues 2201–2211 (HSQAGSRHGQS), 2219–2228 (QGTTHGQTGD), and 2238–2247 (GQSTQRGSRT). Residues 2273 to 2288 (GHIQGQAGSQQRQPGS) show a composition bias toward polar residues. The span at 2320–2331 (SRSSRASHFQSH) shows a compositional bias: low complexity. Polar residues predominate over residues 2367 to 2391 (SRKSISNSHLSWSTDSTANKQLSRH).

It belongs to the S100-fused protein family. This sequence in the N-terminal section; belongs to the S-100 family. Post-translationally, deiminated by PADI1, PADI2 or PADI3 in vitro. The deiminated form is degraded by calpain-1/CAPN1 more quickly and into shorter peptides than the intact protein. In terms of processing, may be processed by calpain-1/CAPN1 in the uppermost epidermal layers. Expressed in skin, thymus, stomach and placenta, but not detected in heart, brain, liver, lung, bone marrow, small intestine, spleen, prostate, colon, adrenal gland, kidney, pancreas, mammary gland, bladder, thyroid, salivary gland and trachea. Weakly expressed in esophagus, tonsils and testis (at protein level). In the skin, strongly expressed in the upper stratum granulosum and lower stratum corneum, but not detected in the upper stratum corneum (at protein level). In scalp hair follicles, mainly restricted within the granular and cornified cells surrounding the infundibular outer root sheath, with weak expression in central and proximal outer root sheath (at protein level). Tends to be down-regulated in sporiatic lesions compared to non-lesional skin inthe same patients.

Its subcellular location is the cytoplasm. The protein localises to the cytoplasmic granule. Functionally, essential for normal cell-cell adhesion in the cornified cell layers. Important for proper integrity and mechanical strength of the stratum corneum of the epidermis. The polypeptide is Filaggrin-2 (FLG2) (Homo sapiens (Human)).